The sequence spans 79 residues: UPF0349 protein BCE_5075 (79 aa).

It belongs to the UPF0349 family.

This chain is UPF0349 protein BCE_5075, found in Bacillus cereus (strain ATCC 10987 / NRS 248).